Consider the following 519-residue polypeptide: Pleckstrin homology domain-containing family A member 8 (519 aa).

Positions 1-93 (MEGVLYKWTN…WLVALGSAKA (93 aa)) constitute a PH domain. Residue Thr139 is modified to Phosphothreonine. Residue Ser145 is modified to Phosphoserine. Thr153 carries the post-translational modification Phosphothreonine. A glycolipid transfer protein homology domain region spans residues 310–519 (TFFSTMNTSF…VHGLESDEVV (210 aa)).

In terms of assembly, homodimer. Interacts with ARF1; the interaction together with phosphatidylinositol 4-phosphate binding is required for FAPP2 GlcCer transfer ability. As to expression, expressed in kidney cell lines.

It localises to the golgi apparatus. The protein resides in the trans-Golgi network membrane. The protein localises to the membrane. Cargo transport protein that is required for apical transport from the Golgi complex. Transports AQP2 from the trans-Golgi network (TGN) to sites of AQP2 phosphorylation. Mediates the non-vesicular transport of glucosylceramide (GlcCer) from the trans-Golgi network (TGN) to the plasma membrane and plays a pivotal role in the synthesis of complex glycosphingolipids. Binding of both phosphatidylinositol 4-phosphate (PIP) and ARF1 are essential for the GlcCer transfer ability. Also required for primary cilium formation, possibly by being involved in the transport of raft lipids to the apical membrane, and for membrane tubulation. This chain is Pleckstrin homology domain-containing family A member 8 (PLEKHA8), found in Homo sapiens (Human).